The chain runs to 383 residues: Corticosteroid-binding globulin (383 aa).

2 N-linked (GlcNAc...) asparagine glycosylation sites follow: asparagine 74 and asparagine 154. Glutamine 232 contributes to the cortisol binding site. N-linked (GlcNAc...) asparagine glycosylation is present at asparagine 238. Glutamine 264 is a cortisol binding site. A glycan (N-linked (GlcNAc...) asparagine) is linked at asparagine 308. Tryptophan 371 is a cortisol binding site.

The protein belongs to the serpin family. As to expression, produced and secreted by hepatocytes, but has also been identified in a number of glycocorticoid responsive cells (it is found in maternal lung, spleen, and ovary and fetal kidney).

It is found in the secreted. Functionally, major transport protein for glucocorticoids and progestins in the blood of almost all vertebrate species. The chain is Corticosteroid-binding globulin (SERPINA6) from Oryctolagus cuniculus (Rabbit).